Consider the following 260-residue polypeptide: NH(3)-dependent NAD(+) synthetase (260 aa).

Residue 31-38 (GLSGGLDS) coordinates ATP. Residue Asp-37 participates in Mg(2+) binding. Arg-112 provides a ligand contact to deamido-NAD(+). ATP is bound at residue Thr-132. Position 137 (Glu-137) interacts with Mg(2+). Lys-161 and Ser-183 together coordinate ATP.

This sequence belongs to the NAD synthetase family. As to quaternary structure, homodimer.

The enzyme catalyses deamido-NAD(+) + NH4(+) + ATP = AMP + diphosphate + NAD(+) + H(+). It functions in the pathway cofactor biosynthesis; NAD(+) biosynthesis; NAD(+) from deamido-NAD(+) (ammonia route): step 1/1. Functionally, catalyzes the ATP-dependent amidation of deamido-NAD to form NAD. Uses ammonia as a nitrogen source. The sequence is that of NH(3)-dependent NAD(+) synthetase from Helicobacter pylori (strain J99 / ATCC 700824) (Campylobacter pylori J99).